Consider the following 695-residue polypeptide: Elongation factor G (695 aa).

Residues 12-286 form the tr-type G domain; it reads DKLRNIGIMA…AVIDYLPSPL (275 aa). Residues 21-28, 85-89, and 139-142 contribute to the GTP site; these read AHIDAGKT, DTPGH, and NKMD.

It belongs to the TRAFAC class translation factor GTPase superfamily. Classic translation factor GTPase family. EF-G/EF-2 subfamily.

Its subcellular location is the cytoplasm. Catalyzes the GTP-dependent ribosomal translocation step during translation elongation. During this step, the ribosome changes from the pre-translocational (PRE) to the post-translocational (POST) state as the newly formed A-site-bound peptidyl-tRNA and P-site-bound deacylated tRNA move to the P and E sites, respectively. Catalyzes the coordinated movement of the two tRNA molecules, the mRNA and conformational changes in the ribosome. This is Elongation factor G from Thermotoga petrophila (strain ATCC BAA-488 / DSM 13995 / JCM 10881 / RKU-1).